The following is a 427-amino-acid chain: Glutamate-1-semialdehyde 2,1-aminomutase (427 aa).

Position 265 is an N6-(pyridoxal phosphate)lysine (K265).

The protein belongs to the class-III pyridoxal-phosphate-dependent aminotransferase family. HemL subfamily. In terms of assembly, homodimer. Requires pyridoxal 5'-phosphate as cofactor.

Its subcellular location is the cytoplasm. It catalyses the reaction (S)-4-amino-5-oxopentanoate = 5-aminolevulinate. Its pathway is porphyrin-containing compound metabolism; protoporphyrin-IX biosynthesis; 5-aminolevulinate from L-glutamyl-tRNA(Glu): step 2/2. In Pseudomonas entomophila (strain L48), this protein is Glutamate-1-semialdehyde 2,1-aminomutase.